We begin with the raw amino-acid sequence, 175 residues long: Peptide deformylase (175 aa).

Positions 99 and 141 each coordinate Fe cation. Glu-142 is a catalytic residue. His-145 lines the Fe cation pocket.

It belongs to the polypeptide deformylase family. The cofactor is Fe(2+).

It catalyses the reaction N-terminal N-formyl-L-methionyl-[peptide] + H2O = N-terminal L-methionyl-[peptide] + formate. Functionally, removes the formyl group from the N-terminal Met of newly synthesized proteins. Requires at least a dipeptide for an efficient rate of reaction. N-terminal L-methionine is a prerequisite for activity but the enzyme has broad specificity at other positions. In Rickettsia typhi (strain ATCC VR-144 / Wilmington), this protein is Peptide deformylase.